The sequence spans 131 residues: Large ribosomal subunit protein bL12 (131 aa).

This sequence belongs to the bacterial ribosomal protein bL12 family. In terms of assembly, homodimer. Part of the ribosomal stalk of the 50S ribosomal subunit. Forms a multimeric L10(L12)X complex, where L10 forms an elongated spine to which 2 to 4 L12 dimers bind in a sequential fashion. Binds GTP-bound translation factors.

Functionally, forms part of the ribosomal stalk which helps the ribosome interact with GTP-bound translation factors. Is thus essential for accurate translation. This is Large ribosomal subunit protein bL12 from Tropheryma whipplei (strain Twist) (Whipple's bacillus).